Here is a 379-residue protein sequence, read N- to C-terminus: Chaperone protein DnaJ (379 aa).

Positions 5–69 (EYYERLGVDK…QKRAAYDQYG (65 aa)) constitute a J domain. The CR-type zinc-finger motif lies at 141-223 (GVEKQVKYNR…CHGSGHEKVA (83 aa)). Zn(2+)-binding residues include cysteine 154, cysteine 157, cysteine 171, cysteine 174, cysteine 197, cysteine 200, cysteine 211, and cysteine 214. CXXCXGXG motif repeat units lie at residues 154–161 (CHTCGGSG), 171–178 (CHKCGGRG), 197–204 (CDVCHGTG), and 211–218 (CTTCHGSG).

This sequence belongs to the DnaJ family. As to quaternary structure, homodimer. Requires Zn(2+) as cofactor.

The protein resides in the cytoplasm. Its function is as follows. Participates actively in the response to hyperosmotic and heat shock by preventing the aggregation of stress-denatured proteins and by disaggregating proteins, also in an autonomous, DnaK-independent fashion. Unfolded proteins bind initially to DnaJ; upon interaction with the DnaJ-bound protein, DnaK hydrolyzes its bound ATP, resulting in the formation of a stable complex. GrpE releases ADP from DnaK; ATP binding to DnaK triggers the release of the substrate protein, thus completing the reaction cycle. Several rounds of ATP-dependent interactions between DnaJ, DnaK and GrpE are required for fully efficient folding. Also involved, together with DnaK and GrpE, in the DNA replication of plasmids through activation of initiation proteins. This is Chaperone protein DnaJ from Lactococcus lactis subsp. cremoris (strain MG1363).